A 491-amino-acid chain; its full sequence is Carbohydrate ABC transporter substrate-binding protein (491 aa).

The Zn(2+) site is built by Asp212, His247, His252, and Glu256.

This sequence belongs to the bacterial solute-binding protein 1 family. In terms of assembly, exists as a monomer, homodimer, homotrimer and homotetramer; oligomerization increases with higher protein concentration.

The protein resides in the cell surface. Its function is as follows. Probably part of an ABC transporter complex involved in carbohydrate transport. This chain is Carbohydrate ABC transporter substrate-binding protein, found in Streptococcus pneumoniae serotype 4 (strain ATCC BAA-334 / TIGR4).